Here is a 1117-residue protein sequence, read N- to C-terminus: Protein ECM21 (1117 aa).

2 disordered regions span residues 1-48 and 63-155; these read MPFI…RRSS and VHSP…YSQI. Residues 11-34 show a composition bias toward polar residues; it reads KNSSHSLSETDLNQSKGQPFQPSP. At Ser18 the chain carries Phosphoserine. Residues 70-81 show a composition bias toward low complexity; sequence NNTTKGGNNNGN. At Ser115 the chain carries Phosphoserine. Low complexity predominate over residues 117–130; sequence SDSATTTPRSSTSD. Ser140 carries the phosphoserine modification. Lys191 participates in a covalent cross-link: Glycyl lysine isopeptide (Lys-Gly) (interchain with G-Cter in ubiquitin). Disordered regions lie at residues 275–312 and 486–523; these read ATTA…ELNT and YRQD…AQAH. Residue Ser286 is modified to Phosphoserine. The span at 501 to 519 shows a compositional bias: low complexity; it reads SSSSLSSTTSSLKLTETES. Ser527 and Ser550 each carry phosphoserine. Glycyl lysine isopeptide (Lys-Gly) (interchain with G-Cter in ubiquitin) cross-links involve residues Lys577, Lys651, and Lys712. Phosphoserine is present on Ser775. Glycyl lysine isopeptide (Lys-Gly) (interchain with G-Cter in ubiquitin) cross-links involve residues Lys794, Lys807, and Lys1024. Disordered regions lie at residues 1016 to 1065 and 1079 to 1117; these read RSRF…KDKQ and KDDE…SDEE. The segment covering 1027–1059 has biased composition (polar residues); the sequence is STPSPVNRSHNSSPTNGLSQANGTVRIPNATTE. Ser1035 is modified (phosphoserine). Residues 1089-1098 are compositionally biased toward low complexity; the sequence is SSSSADSLLS.

Belongs to the CSR2 family.

Its subcellular location is the cytoplasm. May be involved in cell wall organization and biogenesis. The chain is Protein ECM21 (ECM21) from Saccharomyces cerevisiae (strain ATCC 204508 / S288c) (Baker's yeast).